The sequence spans 128 residues: Glycine cleavage system H protein (128 aa).

Residues 24–106 form the Lipoyl-binding domain; the sequence is LVRIGISEFA…HGEGWLLIIR (83 aa). Lys-65 is modified (N6-lipoyllysine).

It belongs to the GcvH family. The glycine cleavage system is composed of four proteins: P, T, L and H. It depends on (R)-lipoate as a cofactor.

In terms of biological role, the glycine cleavage system catalyzes the degradation of glycine. The H protein shuttles the methylamine group of glycine from the P protein to the T protein. In Prochlorococcus marinus (strain NATL2A), this protein is Glycine cleavage system H protein.